Consider the following 64-residue polypeptide: Large ribosomal subunit protein bL35 (64 aa).

2 stretches are compositionally biased toward basic residues: residues 1-15 (MPKAKTHSGASKRFR) and 23-33 (VRQKANRRHLL). A disordered region spans residues 1–47 (MPKAKTHSGASKRFRTTGSGKIVRQKANRRHLLEHKPTSRTRRLDGR). Basic and acidic residues predominate over residues 34–46 (EHKPTSRTRRLDG).

It belongs to the bacterial ribosomal protein bL35 family.

The sequence is that of Large ribosomal subunit protein bL35 from Mycobacteroides abscessus (strain ATCC 19977 / DSM 44196 / CCUG 20993 / CIP 104536 / JCM 13569 / NCTC 13031 / TMC 1543 / L948) (Mycobacterium abscessus).